A 279-amino-acid chain; its full sequence is Pantothenate synthetase (279 aa).

27–34 lines the ATP pocket; sequence MGYLHEGH. Catalysis depends on H34, which acts as the Proton donor. Q58 lines the (R)-pantoate pocket. Residue Q58 participates in beta-alanine binding. 144–147 contributes to the ATP binding site; that stretch reads GKKD. Q150 serves as a coordination point for (R)-pantoate. ATP-binding positions include V173 and 181 to 184; that span reads MSSR.

The protein belongs to the pantothenate synthetase family. As to quaternary structure, homodimer.

The protein localises to the cytoplasm. The catalysed reaction is (R)-pantoate + beta-alanine + ATP = (R)-pantothenate + AMP + diphosphate + H(+). It functions in the pathway cofactor biosynthesis; (R)-pantothenate biosynthesis; (R)-pantothenate from (R)-pantoate and beta-alanine: step 1/1. Catalyzes the condensation of pantoate with beta-alanine in an ATP-dependent reaction via a pantoyl-adenylate intermediate. The protein is Pantothenate synthetase of Geobacter sp. (strain M21).